A 162-amino-acid polypeptide reads, in one-letter code: 2-C-methyl-D-erythritol 2,4-cyclodiphosphate synthase (162 aa).

A divalent metal cation is bound by residues Asp12 and His14. 4-CDP-2-C-methyl-D-erythritol 2-phosphate-binding positions include 12 to 14 (DVH) and 38 to 39 (HS). A divalent metal cation is bound at residue His46. Residues 60–62 (DIG), 65–69 (FPDTD), and Arg146 contribute to the 4-CDP-2-C-methyl-D-erythritol 2-phosphate site.

It belongs to the IspF family. Homotrimer. The cofactor is a divalent metal cation.

It catalyses the reaction 4-CDP-2-C-methyl-D-erythritol 2-phosphate = 2-C-methyl-D-erythritol 2,4-cyclic diphosphate + CMP. It participates in isoprenoid biosynthesis; isopentenyl diphosphate biosynthesis via DXP pathway; isopentenyl diphosphate from 1-deoxy-D-xylulose 5-phosphate: step 4/6. Involved in the biosynthesis of isopentenyl diphosphate (IPP) and dimethylallyl diphosphate (DMAPP), two major building blocks of isoprenoid compounds. Catalyzes the conversion of 4-diphosphocytidyl-2-C-methyl-D-erythritol 2-phosphate (CDP-ME2P) to 2-C-methyl-D-erythritol 2,4-cyclodiphosphate (ME-CPP) with a corresponding release of cytidine 5-monophosphate (CMP). This is 2-C-methyl-D-erythritol 2,4-cyclodiphosphate synthase from Bordetella avium (strain 197N).